The sequence spans 356 residues: Protein-glutamate methylesterase/protein-glutamine glutaminase 2 (356 aa).

In terms of domain architecture, Response regulatory spans 6–123 (KVLIVDDSAL…KQFLEESSIR (118 aa)). Residue Asp57 is modified to 4-aspartylphosphate. Residues 165–356 (VQRTEKVVVV…AAAIVKACNS (192 aa)) enclose the CheB-type methylesterase domain. Catalysis depends on residues Ser177, His203, and Asp299.

It belongs to the CheB family. Post-translationally, phosphorylated by CheA. Phosphorylation of the N-terminal regulatory domain activates the methylesterase activity.

It is found in the cytoplasm. The enzyme catalyses [protein]-L-glutamate 5-O-methyl ester + H2O = L-glutamyl-[protein] + methanol + H(+). It carries out the reaction L-glutaminyl-[protein] + H2O = L-glutamyl-[protein] + NH4(+). Involved in chemotaxis. Part of a chemotaxis signal transduction system that modulates chemotaxis in response to various stimuli. Catalyzes the demethylation of specific methylglutamate residues introduced into the chemoreceptors (methyl-accepting chemotaxis proteins or MCP) by CheR. Also mediates the irreversible deamidation of specific glutamine residues to glutamic acid. The polypeptide is Protein-glutamate methylesterase/protein-glutamine glutaminase 2 (Oleidesulfovibrio alaskensis (strain ATCC BAA-1058 / DSM 17464 / G20) (Desulfovibrio alaskensis)).